A 1139-amino-acid chain; its full sequence is uncharacterized protein (1139 aa).

This sequence belongs to the IIV-6 295L family.

This is an uncharacterized protein from Aedes vexans (Inland floodwater mosquito).